We begin with the raw amino-acid sequence, 489 residues long: Bifunctional protein HldE (489 aa).

The segment at 1–330 (MFDFDGLSNA…RKILPPAFLA (330 aa)) is ribokinase. An ATP-binding site is contributed by 205–208 (NRKE). Asp-275 is an active-site residue. Positions 358 to 489 (FTNGCFDILH…SLVKRAGGRA (132 aa)) are cytidylyltransferase.

The protein in the N-terminal section; belongs to the carbohydrate kinase PfkB family. It in the C-terminal section; belongs to the cytidylyltransferase family. Homodimer.

The catalysed reaction is D-glycero-beta-D-manno-heptose 7-phosphate + ATP = D-glycero-beta-D-manno-heptose 1,7-bisphosphate + ADP + H(+). The enzyme catalyses D-glycero-beta-D-manno-heptose 1-phosphate + ATP + H(+) = ADP-D-glycero-beta-D-manno-heptose + diphosphate. Its pathway is nucleotide-sugar biosynthesis; ADP-L-glycero-beta-D-manno-heptose biosynthesis; ADP-L-glycero-beta-D-manno-heptose from D-glycero-beta-D-manno-heptose 7-phosphate: step 1/4. The protein operates within nucleotide-sugar biosynthesis; ADP-L-glycero-beta-D-manno-heptose biosynthesis; ADP-L-glycero-beta-D-manno-heptose from D-glycero-beta-D-manno-heptose 7-phosphate: step 3/4. Functionally, catalyzes the phosphorylation of D-glycero-D-manno-heptose 7-phosphate at the C-1 position to selectively form D-glycero-beta-D-manno-heptose-1,7-bisphosphate. Catalyzes the ADP transfer from ATP to D-glycero-beta-D-manno-heptose 1-phosphate, yielding ADP-D-glycero-beta-D-manno-heptose. The polypeptide is Bifunctional protein HldE (Nitrobacter hamburgensis (strain DSM 10229 / NCIMB 13809 / X14)).